The primary structure comprises 77 residues: Acyl carrier protein (77 aa).

The 76-residue stretch at 1–76 folds into the Carrier domain; the sequence is MSLEDDVKAI…DVIKYIQERQ (76 aa). The residue at position 36 (Ser-36) is an O-(pantetheine 4'-phosphoryl)serine.

The protein belongs to the acyl carrier protein (ACP) family. In terms of processing, 4'-phosphopantetheine is transferred from CoA to a specific serine of apo-ACP by AcpS. This modification is essential for activity because fatty acids are bound in thioester linkage to the sulfhydryl of the prosthetic group.

Its subcellular location is the cytoplasm. It participates in lipid metabolism; fatty acid biosynthesis. Its function is as follows. Carrier of the growing fatty acid chain in fatty acid biosynthesis. The protein is Acyl carrier protein of Chlamydia muridarum (strain MoPn / Nigg).